Consider the following 116-residue polypeptide: Large ribosomal subunit protein uL18 (116 aa).

This sequence belongs to the universal ribosomal protein uL18 family. In terms of assembly, part of the 50S ribosomal subunit; part of the 5S rRNA/L5/L18/L25 subcomplex. Contacts the 5S and 23S rRNAs.

In terms of biological role, this is one of the proteins that bind and probably mediate the attachment of the 5S RNA into the large ribosomal subunit, where it forms part of the central protuberance. The polypeptide is Large ribosomal subunit protein uL18 (Caulobacter vibrioides (strain ATCC 19089 / CIP 103742 / CB 15) (Caulobacter crescentus)).